Here is a 381-residue protein sequence, read N- to C-terminus: 8-amino-7-oxononanoate synthase (381 aa).

Arginine 27 is a binding site for substrate. Residue 105–106 (GY) coordinates pyridoxal 5'-phosphate. Histidine 130 provides a ligand contact to substrate. Pyridoxal 5'-phosphate is bound by residues serine 176, 201–204 (DEAH), and 232–235 (TLSK). The residue at position 235 (lysine 235) is an N6-(pyridoxal phosphate)lysine. Residue threonine 345 coordinates substrate.

This sequence belongs to the class-II pyridoxal-phosphate-dependent aminotransferase family. BioF subfamily. In terms of assembly, homodimer. It depends on pyridoxal 5'-phosphate as a cofactor.

It carries out the reaction 6-carboxyhexanoyl-[ACP] + L-alanine + H(+) = (8S)-8-amino-7-oxononanoate + holo-[ACP] + CO2. The protein operates within cofactor biosynthesis; biotin biosynthesis. In terms of biological role, catalyzes the decarboxylative condensation of pimeloyl-[acyl-carrier protein] and L-alanine to produce 8-amino-7-oxononanoate (AON), [acyl-carrier protein], and carbon dioxide. This is 8-amino-7-oxononanoate synthase from Mycobacterium avium (strain 104).